Reading from the N-terminus, the 397-residue chain is Acetate kinase (397 aa).

Asn8 lines the Mg(2+) pocket. Lys15 is an ATP binding site. Arg89 is a substrate binding site. Asp146 functions as the Proton donor/acceptor in the catalytic mechanism. ATP contacts are provided by residues 206 to 210 (HLGNG), 281 to 283 (DLR), and 329 to 333 (GVGEN). Glu382 contributes to the Mg(2+) binding site.

The protein belongs to the acetokinase family. Homodimer. Mg(2+) is required as a cofactor. It depends on Mn(2+) as a cofactor.

The protein resides in the cytoplasm. It catalyses the reaction acetate + ATP = acetyl phosphate + ADP. It functions in the pathway metabolic intermediate biosynthesis; acetyl-CoA biosynthesis; acetyl-CoA from acetate: step 1/2. Functionally, catalyzes the formation of acetyl phosphate from acetate and ATP. Can also catalyze the reverse reaction. The sequence is that of Acetate kinase from Bacillus thuringiensis subsp. konkukian (strain 97-27).